The chain runs to 380 residues: Flap endonuclease 1 (380 aa).

The segment at 1–104 is N-domain; that stretch reads MGIQGLAKLI…GELAKRSERR (104 aa). R19 is modified (symmetric dimethylarginine; by PRMT5). D34 lines the Mg(2+) pocket. 2 residues coordinate DNA: R47 and R70. K80 carries the post-translational modification N6-acetyllysine. D86 is a Mg(2+) binding site. Symmetric dimethylarginine; by PRMT5 is present on residues R100 and R104. The tract at residues 122–253 is I-domain; sequence EVEKFTKRLV…KRAVDLIQKH (132 aa). Positions 158, 160, 179, and 181 each coordinate Mg(2+). Residue E158 participates in DNA binding. A Phosphoserine; by CDK2 modification is found at S187. R192 carries the symmetric dimethylarginine; by PRMT5 modification. S197 is subject to Phosphoserine. Residues G231 and D233 each coordinate DNA. Mg(2+) is bound at residue D233. A phosphoserine mark is found at S255, S293, and S335. A disordered region spans residues 327-380; that stretch reads RLSKSRQGSTQGRLDDFFKVTGSLSSAKRKEPEPKGSTKKKAKTGAAGKFKRGK. T336 carries the phosphothreonine modification. The interaction with PCNA stretch occupies residues 336–344; the sequence is TQGRLDDFF. Residue K354 is modified to N6-acetyllysine. Over residues 363–380 the composition is skewed to basic residues; that stretch reads STKKKAKTGAAGKFKRGK. T364 carries the phosphothreonine modification. Residues K375, K377, and K380 each carry the N6-acetyllysine modification.

The protein belongs to the XPG/RAD2 endonuclease family. FEN1 subfamily. Interacts with PCNA. Three molecules of FEN1 bind to one PCNA trimer with each molecule binding to one PCNA monomer. PCNA stimulates the nuclease activity without altering cleavage specificity. The C-terminal domain binds EP300; can bind simultaneously to both PCNA and EP300. Interacts with DDX11; this interaction is direct and increases flap endonuclease activity of FEN1. Interacts with WDR4; regulating its endonuclease activity. Interacts with POLB. It depends on Mg(2+) as a cofactor. Post-translationally, acetylated by EP300. Acetylation inhibits both endonuclease and exonuclease activity. Acetylation also reduces DNA-binding activity but does not affect interaction with PCNA or EP300. In terms of processing, phosphorylation upon DNA damage induces relocalization to the nuclear plasma. Phosphorylation at Ser-187 by CDK2 occurs during late S-phase and results in dissociation from PCNA. Methylation at Arg-192 by PRMT5 impedes Ser-187 phosphorylation and increases interaction with PCNA.

It localises to the nucleus. The protein localises to the nucleolus. Its subcellular location is the nucleoplasm. The protein resides in the mitochondrion. In terms of biological role, structure-specific nuclease with 5'-flap endonuclease and 5'-3' exonuclease activities involved in DNA replication and repair. During DNA replication, cleaves the 5'-overhanging flap structure that is generated by displacement synthesis when DNA polymerase encounters the 5'-end of a downstream Okazaki fragment. It enters the flap from the 5'-end and then tracks to cleave the flap base, leaving a nick for ligation. Also involved in the long patch base excision repair (LP-BER) pathway, by cleaving within the apurinic/apyrimidinic (AP) site-terminated flap. Acts as a genome stabilization factor that prevents flaps from equilibrating into structures that lead to duplications and deletions. Also possesses 5'-3' exonuclease activity on nicked or gapped double-stranded DNA, and exhibits RNase H activity. Also involved in replication and repair of rDNA and in repairing mitochondrial DNA. This is Flap endonuclease 1 from Homo sapiens (Human).